The sequence spans 122 residues: Ribonuclease P protein component (122 aa).

This sequence belongs to the RnpA family. Consists of a catalytic RNA component (M1 or rnpB) and a protein subunit.

The enzyme catalyses Endonucleolytic cleavage of RNA, removing 5'-extranucleotides from tRNA precursor.. Functionally, RNaseP catalyzes the removal of the 5'-leader sequence from pre-tRNA to produce the mature 5'-terminus. It can also cleave other RNA substrates such as 4.5S RNA. The protein component plays an auxiliary but essential role in vivo by binding to the 5'-leader sequence and broadening the substrate specificity of the ribozyme. The sequence is that of Ribonuclease P protein component from Oenococcus oeni (strain ATCC BAA-331 / PSU-1).